The chain runs to 227 residues: Cytochrome c oxidase subunit 2 (227 aa).

Residues 1-14 (MAYPFQLGLQDATS) are Mitochondrial intermembrane-facing. A helical transmembrane segment spans residues 15-45 (PIMEELLHFHDHTLMIVFLISSLVLYIISLM). The Mitochondrial matrix segment spans residues 46 to 59 (LTTKLTHTSTMDAQ). A helical membrane pass occupies residues 60–87 (EVETVWTILPAIILILIALPSLRILYMM). At 88–227 (DEINNPSLTV…YFETWSAVMV (140 aa)) the chain is on the mitochondrial intermembrane side. 6 residues coordinate Cu cation: His161, Cys196, Glu198, Cys200, His204, and Met207. Residue Glu198 coordinates Mg(2+). A Phosphotyrosine modification is found at Tyr218.

Belongs to the cytochrome c oxidase subunit 2 family. As to quaternary structure, component of the cytochrome c oxidase (complex IV, CIV), a multisubunit enzyme composed of 14 subunits. The complex is composed of a catalytic core of 3 subunits MT-CO1, MT-CO2 and MT-CO3, encoded in the mitochondrial DNA, and 11 supernumerary subunits COX4I, COX5A, COX5B, COX6A, COX6B, COX6C, COX7A, COX7B, COX7C, COX8 and NDUFA4, which are encoded in the nuclear genome. The complex exists as a monomer or a dimer and forms supercomplexes (SCs) in the inner mitochondrial membrane with NADH-ubiquinone oxidoreductase (complex I, CI) and ubiquinol-cytochrome c oxidoreductase (cytochrome b-c1 complex, complex III, CIII), resulting in different assemblies (supercomplex SCI(1)III(2)IV(1) and megacomplex MCI(2)III(2)IV(2)). Found in a complex with TMEM177, COA6, COX18, COX20, SCO1 and SCO2. Interacts with TMEM177 in a COX20-dependent manner. Interacts with COX20. Interacts with COX16. Requires Cu cation as cofactor.

The protein localises to the mitochondrion inner membrane. The catalysed reaction is 4 Fe(II)-[cytochrome c] + O2 + 8 H(+)(in) = 4 Fe(III)-[cytochrome c] + 2 H2O + 4 H(+)(out). Functionally, component of the cytochrome c oxidase, the last enzyme in the mitochondrial electron transport chain which drives oxidative phosphorylation. The respiratory chain contains 3 multisubunit complexes succinate dehydrogenase (complex II, CII), ubiquinol-cytochrome c oxidoreductase (cytochrome b-c1 complex, complex III, CIII) and cytochrome c oxidase (complex IV, CIV), that cooperate to transfer electrons derived from NADH and succinate to molecular oxygen, creating an electrochemical gradient over the inner membrane that drives transmembrane transport and the ATP synthase. Cytochrome c oxidase is the component of the respiratory chain that catalyzes the reduction of oxygen to water. Electrons originating from reduced cytochrome c in the intermembrane space (IMS) are transferred via the dinuclear copper A center (CU(A)) of subunit 2 and heme A of subunit 1 to the active site in subunit 1, a binuclear center (BNC) formed by heme A3 and copper B (CU(B)). The BNC reduces molecular oxygen to 2 water molecules using 4 electrons from cytochrome c in the IMS and 4 protons from the mitochondrial matrix. The protein is Cytochrome c oxidase subunit 2 (MT-CO2) of Lycalopex culpaeus (Culpeo fox).